The chain runs to 456 residues: Glutamyl-tRNA reductase (456 aa).

Substrate is bound by residues 49–52, Ser-109, 114–116, and Gln-120; these read TCNR and EQQ. Catalysis depends on Cys-50, which acts as the Nucleophile. An NADP(+)-binding site is contributed by 189–194; sequence GAGSMG.

This sequence belongs to the glutamyl-tRNA reductase family. Homodimer.

It catalyses the reaction (S)-4-amino-5-oxopentanoate + tRNA(Glu) + NADP(+) = L-glutamyl-tRNA(Glu) + NADPH + H(+). It functions in the pathway porphyrin-containing compound metabolism; protoporphyrin-IX biosynthesis; 5-aminolevulinate from L-glutamyl-tRNA(Glu): step 1/2. Functionally, catalyzes the NADPH-dependent reduction of glutamyl-tRNA(Glu) to glutamate 1-semialdehyde (GSA). In Mycolicibacterium vanbaalenii (strain DSM 7251 / JCM 13017 / BCRC 16820 / KCTC 9966 / NRRL B-24157 / PYR-1) (Mycobacterium vanbaalenii), this protein is Glutamyl-tRNA reductase.